The chain runs to 311 residues: Homeobox-leucine zipper protein HOX1 (311 aa).

Disordered stretches follow at residues 29-69 (AGGA…SDHR) and 97-160 (AETT…KKLR). Low complexity predominate over residues 119-145 (SSPNSTLSSLSGKRGAPSAATAAAAAA). A DNA-binding region (homeobox) is located at residues 154-213 (GSRKKLRLSKDQAAVLEDTFKEHNTLNPKQKAALARQLNLKPRQVEVWFQNRRARTKLKQ). A leucine-zipper region spans residues 212–256 (KQTEVDCELLKRCCETLTDENRRLHRELQELRALKLATAAAAPHH). The interval 279–311 (SAATTTRNNSGAAPARPVPTRPWPPAAAQRSSA) is disordered. The span at 280-289 (AATTTRNNSG) shows a compositional bias: polar residues. Residues 294–303 (RPVPTRPWPP) show a composition bias toward pro residues.

The protein belongs to the HD-ZIP homeobox family. Class II subfamily. In terms of assembly, homodimer. May form a heterodimer with HOX2, HOX3 or HOX7. Expressed in root provascular and vascular cylinder, provascular and vascular strands of leaves, provascular and vascular strands of the whole panicle, in mature embryo provascular bundles of scutellum and embryonic axis and provascular and vascular strands of young immature spikelet organs. Expressed in differentiating and differentiated xylem and phloem elements, and in outer and inner bundle sheath cells of all vascular bundles. Expressed in auricles, ligules, culm, guard cells brac hairs and pollen.

The protein resides in the nucleus. In terms of biological role, probable transcription repressor involved leaf development. Binds to the DNA sequence 5'-CAAT[GC]ATTG-3'. May act as a regulatory switch to specify provascular cell fate. The protein is Homeobox-leucine zipper protein HOX1 (HOX1) of Oryza sativa subsp. indica (Rice).